The sequence spans 459 residues: Probable 1,4-beta-D-glucan cellobiohydrolase C (459 aa).

An N-terminal signal peptide occupies residues 1-18 (MHYPLSLALAFLPFGIQA). The 36-residue stretch at 19–54 (QQTLWGQCGGQGYSGATSCVAGATCATVNEYYAQCT) folds into the CBM1 domain. 2 disulfide bridges follow: Cys-26/Cys-43 and Cys-37/Cys-53. The thr-rich linker stretch occupies residues 54 to 94 (TPAAGTSSATTLKTTTSSTTAAVTTTTTTQSPTGSASPTTT). The interval 76 to 97 (VTTTTTTQSPTGSASPTTTASA) is disordered. Positions 95–459 (ASASGNPFSG…QLLTNANPAF (365 aa)) are catalytic. Asp-189 is an active-site residue. A disulfide bridge links Cys-190 with Cys-249. The active-site Proton donor is the Asp-235. N-linked (GlcNAc...) asparagine glycosylation is present at Asn-303. Cys-381 and Cys-428 are oxidised to a cystine. Asp-414 (nucleophile) is an active-site residue.

It belongs to the glycosyl hydrolase 6 (cellulase B) family.

The protein localises to the secreted. It catalyses the reaction Hydrolysis of (1-&gt;4)-beta-D-glucosidic linkages in cellulose and cellotetraose, releasing cellobiose from the non-reducing ends of the chains.. Functionally, the biological conversion of cellulose to glucose generally requires three types of hydrolytic enzymes: (1) Endoglucanases which cut internal beta-1,4-glucosidic bonds; (2) Exocellobiohydrolases that cut the disaccharide cellobiose from the non-reducing end of the cellulose polymer chain; (3) Beta-1,4-glucosidases which hydrolyze the cellobiose and other short cello-oligosaccharides to glucose. The polypeptide is Probable 1,4-beta-D-glucan cellobiohydrolase C (cbhC) (Aspergillus niger (strain ATCC MYA-4892 / CBS 513.88 / FGSC A1513)).